The sequence spans 88 residues: UPF0297 protein STER_1937 (88 aa).

Belongs to the UPF0297 family.

In Streptococcus thermophilus (strain ATCC BAA-491 / LMD-9), this protein is UPF0297 protein STER_1937.